Consider the following 376-residue polypeptide: TelA-like protein SERP0976 (376 aa).

Belongs to the TelA family.

The protein is TelA-like protein SERP0976 of Staphylococcus epidermidis (strain ATCC 35984 / DSM 28319 / BCRC 17069 / CCUG 31568 / BM 3577 / RP62A).